A 108-amino-acid polypeptide reads, in one-letter code: Protein YcgL (108 aa).

The YcgL domain maps to 12 to 96 (MFCVIYRSSK…PPEDLLKQHL (85 aa)).

This chain is Protein YcgL, found in Escherichia coli O9:H4 (strain HS).